The chain runs to 336 residues: Dihydroorotate dehydrogenase (quinone) (336 aa).

Residues 62-66 (AGLDK) and T86 each bind FMN. A substrate-binding site is contributed by K66. 111-115 (NRMGF) contributes to the substrate binding site. Residues N139 and N172 each contribute to the FMN site. N172 contacts substrate. The active-site Nucleophile is the S175. N177 contacts substrate. Positions 217 and 245 each coordinate FMN. Residue 246 to 247 (NT) coordinates substrate. FMN is bound by residues G268, G297, and 318-319 (YS).

Belongs to the dihydroorotate dehydrogenase family. Type 2 subfamily. Monomer. FMN serves as cofactor.

The protein resides in the cell membrane. The enzyme catalyses (S)-dihydroorotate + a quinone = orotate + a quinol. The protein operates within pyrimidine metabolism; UMP biosynthesis via de novo pathway; orotate from (S)-dihydroorotate (quinone route): step 1/1. Catalyzes the conversion of dihydroorotate to orotate with quinone as electron acceptor. In Yersinia enterocolitica serotype O:8 / biotype 1B (strain NCTC 13174 / 8081), this protein is Dihydroorotate dehydrogenase (quinone).